We begin with the raw amino-acid sequence, 427 residues long: Glutamate-1-semialdehyde 2,1-aminomutase (427 aa).

Lys267 bears the N6-(pyridoxal phosphate)lysine mark.

It belongs to the class-III pyridoxal-phosphate-dependent aminotransferase family. HemL subfamily. In terms of assembly, homodimer. Pyridoxal 5'-phosphate serves as cofactor.

The protein resides in the cytoplasm. The enzyme catalyses (S)-4-amino-5-oxopentanoate = 5-aminolevulinate. It participates in porphyrin-containing compound metabolism; protoporphyrin-IX biosynthesis; 5-aminolevulinate from L-glutamyl-tRNA(Glu): step 2/2. This Geobacter metallireducens (strain ATCC 53774 / DSM 7210 / GS-15) protein is Glutamate-1-semialdehyde 2,1-aminomutase.